The sequence spans 508 residues: MIGFSAFILRNYYAAIGWNEDNLYSSLTRTSSALLDFQLPQSLILQLANSPTPIFFTSYALDALPQLNGSISYITTSMPLDEIGSGRATAFKNVIERFRVFPPPKRPQPKDEVWLGGKRIEGRDYLLYSRLHLPSLHLSGLATTRLTPTLQAHLAFLSQPAHPTSTRPTPPQTPPSHTRQPSEPSTPAPSPTPGNVFISLQHDTGRYCGEYTYSVQDGMVGLRTLYNFGWHGDEESEVDKKERREREGKRIDEEEMMEGGLKGRFSAGGEVYFSAKQRSFGISTGLRFTTVPPTLPLPLNAPVPSPPTTLTLLYNPLIGFLSSAYSAQVSPTVALATRFGVNVYSYESDLSVGGEWWIGRRRGKRGLTTDAEPQLDAESRDPVVTGIEENRELTEKMAQRASLRQVTLRDEIGEDVHAEKELYSPIPAMTDVNAGELAQQISPRLQPQQDLDDERDGVLKARLSGNWQFALLYEARIRNCLVSAGVLADLTGRQHPIRSIGLEVQYFS.

The tract at residues 160–195 is disordered; the sequence is PAHPTSTRPTPPQTPPSHTRQPSEPSTPAPSPTPGN.

Belongs to the MDM10 family. In terms of assembly, component of the ER-mitochondria encounter structure (ERMES) or MDM complex, composed of MMM1, MDM10, MDM12 and MDM34. Associates with the mitochondrial outer membrane sorting assembly machinery SAM(core) complex.

The protein resides in the mitochondrion outer membrane. Its function is as follows. Component of the ERMES/MDM complex, which serves as a molecular tether to connect the endoplasmic reticulum and mitochondria. Components of this complex are involved in the control of mitochondrial shape and protein biogenesis and may function in phospholipid exchange. MDM10 is involved in the late assembly steps of the general translocase of the mitochondrial outer membrane (TOM complex). Functions in the TOM40-specific route of the assembly of outer membrane beta-barrel proteins, including the association of TOM40 with the receptor TOM22 and small TOM proteins. Can associate with the SAM(core) complex as well as the MDM12-MMM1 complex, both involved in late steps of the major beta-barrel assembly pathway, that is responsible for biogenesis of all outer membrane beta-barrel proteins. May act as a switch that shuttles between both complexes and channels precursor proteins into the TOM40-specific pathway. Plays a role in mitochondrial morphology and in the inheritance of mitochondria. The polypeptide is Mitochondrial distribution and morphology protein 10 (Cryptococcus neoformans var. neoformans serotype D (strain B-3501A) (Filobasidiella neoformans)).